Here is a 233-residue protein sequence, read N- to C-terminus: Triosephosphate isomerase (233 aa).

8–10 (NWK) contacts substrate. H91 (electrophile) is an active-site residue. E155 serves as the catalytic Proton acceptor. Substrate contacts are provided by G161 and S192.

It belongs to the triosephosphate isomerase family. In terms of assembly, homodimer.

The protein resides in the cytoplasm. The enzyme catalyses D-glyceraldehyde 3-phosphate = dihydroxyacetone phosphate. It participates in carbohydrate biosynthesis; gluconeogenesis. The protein operates within carbohydrate degradation; glycolysis; D-glyceraldehyde 3-phosphate from glycerone phosphate: step 1/1. In terms of biological role, involved in the gluconeogenesis. Catalyzes stereospecifically the conversion of dihydroxyacetone phosphate (DHAP) to D-glyceraldehyde-3-phosphate (G3P). The protein is Triosephosphate isomerase of Wolbachia sp. subsp. Brugia malayi (strain TRS).